The chain runs to 416 residues: Glutamate dehydrogenase (416 aa).

The active site involves Lys105.

The protein belongs to the Glu/Leu/Phe/Val dehydrogenases family. As to quaternary structure, homohexamer.

It catalyses the reaction L-glutamate + NAD(+) + H2O = 2-oxoglutarate + NH4(+) + NADH + H(+). The enzyme catalyses L-glutamate + NADP(+) + H2O = 2-oxoglutarate + NH4(+) + NADPH + H(+). This is Glutamate dehydrogenase (gdhA) from Thermotoga maritima (strain ATCC 43589 / DSM 3109 / JCM 10099 / NBRC 100826 / MSB8).